Reading from the N-terminus, the 193-residue chain is Peptidyl-tRNA hydrolase (193 aa).

Y16 lines the tRNA pocket. H21 serves as the catalytic Proton acceptor. The tRNA site is built by Y66, N68, and N114.

The protein belongs to the PTH family. In terms of assembly, monomer.

The protein localises to the cytoplasm. The enzyme catalyses an N-acyl-L-alpha-aminoacyl-tRNA + H2O = an N-acyl-L-amino acid + a tRNA + H(+). Functionally, hydrolyzes ribosome-free peptidyl-tRNAs (with 1 or more amino acids incorporated), which drop off the ribosome during protein synthesis, or as a result of ribosome stalling. In terms of biological role, catalyzes the release of premature peptidyl moieties from peptidyl-tRNA molecules trapped in stalled 50S ribosomal subunits, and thus maintains levels of free tRNAs and 50S ribosomes. The protein is Peptidyl-tRNA hydrolase of Geobacter sulfurreducens (strain ATCC 51573 / DSM 12127 / PCA).